Here is a 93-residue protein sequence, read N- to C-terminus: Pyrimidine/purine nucleoside phosphorylase (93 aa).

It belongs to the nucleoside phosphorylase PpnP family.

It carries out the reaction a purine D-ribonucleoside + phosphate = a purine nucleobase + alpha-D-ribose 1-phosphate. The catalysed reaction is adenosine + phosphate = alpha-D-ribose 1-phosphate + adenine. The enzyme catalyses cytidine + phosphate = cytosine + alpha-D-ribose 1-phosphate. It catalyses the reaction guanosine + phosphate = alpha-D-ribose 1-phosphate + guanine. It carries out the reaction inosine + phosphate = alpha-D-ribose 1-phosphate + hypoxanthine. The catalysed reaction is thymidine + phosphate = 2-deoxy-alpha-D-ribose 1-phosphate + thymine. The enzyme catalyses uridine + phosphate = alpha-D-ribose 1-phosphate + uracil. It catalyses the reaction xanthosine + phosphate = alpha-D-ribose 1-phosphate + xanthine. In terms of biological role, catalyzes the phosphorolysis of diverse nucleosides, yielding D-ribose 1-phosphate and the respective free bases. Can use uridine, adenosine, guanosine, cytidine, thymidine, inosine and xanthosine as substrates. Also catalyzes the reverse reactions. The chain is Pyrimidine/purine nucleoside phosphorylase from Magnetococcus marinus (strain ATCC BAA-1437 / JCM 17883 / MC-1).